Consider the following 880-residue polypeptide: Beta-glucosidase 2 (880 aa).

The signal sequence occupies residues 1-17; that stretch reads MLLILELLVLIIGLGVA. N-linked (GlcNAc...) asparagine glycans are attached at residues N24, N77, and N271. The active site involves D299. N336, N343, N376, N548, N589, N712, N743, and N794 each carry an N-linked (GlcNAc...) asparagine glycan.

It belongs to the glycosyl hydrolase 3 family.

The enzyme catalyses Hydrolysis of terminal, non-reducing beta-D-glucosyl residues with release of beta-D-glucose.. It participates in glycan metabolism; cellulose degradation. The chain is Beta-glucosidase 2 (BGL2) from Saccharomycopsis fibuligera (Yeast).